The sequence spans 183 residues: uncharacterized protein (183 aa).

This is an uncharacterized protein from Saccharomyces cerevisiae (strain ATCC 204508 / S288c) (Baker's yeast).